Consider the following 302-residue polypeptide: Mitochondrial adapter protein MCP1 (302 aa).

Residues 1–35 are disordered; sequence MIKLHEVPPEPVDPASLPHDVNAHSPEGDGNPDKR. The Cytoplasmic segment spans residues 1-61; the sequence is MIKLHEVPPE…RFLWNCQKIS (61 aa). Positions 4–12 match the PxP motif; sequence LHEVPPEPV. A helical membrane pass occupies residues 62–82; the sequence is VLPMALYFPLHAANTLITPAV. Residues 83–100 are Mitochondrial intermembrane-facing; the sequence is SPDSAPDDVLMMVREILP. Residues 101 to 121 traverse the membrane as a helical segment; it reads SITTKLLVAGITLHVSAGVLL. Residues 122 to 173 are Cytoplasmic-facing; sequence RIVNNWNKPRRNRHRHLKISAEQDLSQDSIGLTGGISGYLFGLYKTFRIPPQ. A helical membrane pass occupies residues 174–194; the sequence is VISGYILVPVLIYHLLIMKWV. Over 195 to 219 the chain is Mitochondrial intermembrane; the sequence is PNSISTEVDFASIKQLLSSKNRWWK. Residues 220–240 form a helical membrane-spanning segment; the sequence is WLGGLVPLAILLESGVYHIGS. The Cytoplasmic portion of the chain corresponds to 241–258; sequence GLCRYFGVRKMTSRKKWS. The chain crosses the membrane as a helical span at residues 259–276; sequence TAINLLTLVGFVSLIRLM. Topologically, residues 277-302 are mitochondrial intermembrane; that stretch reads KEDSTKLGPNQFESIFKKIRLLLHVN.

Interacts (via PxP motif) with VPS13 (via SHR-BD domain).

The protein localises to the mitochondrion outer membrane. Its function is as follows. Recruits the lipid transfer protein Vps13 to mitochondria thereby promoting vacuole-mitochondria contacts. Involved in mitochondrial lipid homeostasis. The sequence is that of Mitochondrial adapter protein MCP1 from Saccharomyces cerevisiae (strain ATCC 204508 / S288c) (Baker's yeast).